The chain runs to 296 residues: NAD kinase (296 aa).

The active-site Proton acceptor is the aspartate 73. NAD(+)-binding positions include 73-74 (DG), lysine 78, 151-152 (NE), arginine 178, aspartate 180, and 191-196 (TAHAMS).

The protein belongs to the NAD kinase family. The cofactor is a divalent metal cation.

It localises to the cytoplasm. The catalysed reaction is NAD(+) + ATP = ADP + NADP(+) + H(+). Involved in the regulation of the intracellular balance of NAD and NADP, and is a key enzyme in the biosynthesis of NADP. Catalyzes specifically the phosphorylation on 2'-hydroxyl of the adenosine moiety of NAD to yield NADP. The sequence is that of NAD kinase from Francisella tularensis subsp. tularensis (strain WY96-3418).